The sequence spans 362 residues: Serine/threonine-protein phosphatase 2A activator 1 (362 aa).

Positions 1 to 10 are enriched in pro residues; it reads MQPHTQPPQP. Disordered stretches follow at residues 1-28 and 339-362; these read MQPH…APPR and NVEE…PWAR. The span at 340–351 shows a compositional bias: basic and acidic residues; that stretch reads VEERGDKNEGKG.

Belongs to the PTPA-type PPIase family.

The protein resides in the cytoplasm. Its subcellular location is the nucleus. It catalyses the reaction [protein]-peptidylproline (omega=180) = [protein]-peptidylproline (omega=0). Its function is as follows. PPIases accelerate the folding of proteins. It catalyzes the cis-trans isomerization of proline imidic peptide bonds in oligopeptides. Acts as a regulatory subunit for PP2A-like phosphatases modulating their activity or substrate specificity, probably by inducing a conformational change in the catalytic subunit, a direct target of the PPIase. Can reactivate inactive phosphatase PP2A-phosphatase methylesterase complexes (PP2Ai) in presence of ATP and Mg(2+) by dissociating the inactive form from the complex. The protein is Serine/threonine-protein phosphatase 2A activator 1 (RRD1) of Cryptococcus neoformans var. neoformans serotype D (strain B-3501A) (Filobasidiella neoformans).